The following is a 425-amino-acid chain: Enolase (425 aa).

Q163 contributes to the (2R)-2-phosphoglycerate binding site. E205 serves as the catalytic Proton donor. Positions 242, 285, and 312 each coordinate Mg(2+). Positions 337, 366, 367, and 388 each coordinate (2R)-2-phosphoglycerate. Residue K337 is the Proton acceptor of the active site.

Belongs to the enolase family. It depends on Mg(2+) as a cofactor.

The protein localises to the cytoplasm. It is found in the secreted. The protein resides in the cell surface. The catalysed reaction is (2R)-2-phosphoglycerate = phosphoenolpyruvate + H2O. Its pathway is carbohydrate degradation; glycolysis; pyruvate from D-glyceraldehyde 3-phosphate: step 4/5. In terms of biological role, catalyzes the reversible conversion of 2-phosphoglycerate (2-PG) into phosphoenolpyruvate (PEP). It is essential for the degradation of carbohydrates via glycolysis. The chain is Enolase from Granulibacter bethesdensis (strain ATCC BAA-1260 / CGDNIH1).